We begin with the raw amino-acid sequence, 757 residues long: Exo-alpha-(1-&gt;6)-L-arabinopyranosidase (757 aa).

Asp232 is a catalytic residue.

Belongs to the glycosyl hydrolase 3 family. Homotetramer.

With respect to regulation, completely inhibited by Cu(2+) and activated by Co(2+). In terms of biological role, catalyzes the hydrolysis of a non-reducing terminal alpha-L-arabinopyranosidic linkage in ginsenoside Rb2 (alpha-L-arabinopyranosyl-(1-&gt;6)-alpha-D-glucopyranosyl) to release alpha-D-glucopyranosyl (Rd). It is not able to hydrolyze alpha-L-arabinofuranosyl-(1-&gt;6)-alpha-D-glucopyranosyl (Rc). The polypeptide is Exo-alpha-(1-&gt;6)-L-arabinopyranosidase (apy) (Bifidobacterium longum).